Here is a 176-residue protein sequence, read N- to C-terminus: Large ribosomal subunit protein bL19 (176 aa).

It belongs to the bacterial ribosomal protein bL19 family.

Functionally, this protein is located at the 30S-50S ribosomal subunit interface and may play a role in the structure and function of the aminoacyl-tRNA binding site. This chain is Large ribosomal subunit protein bL19, found in Sinorhizobium fredii (strain NBRC 101917 / NGR234).